We begin with the raw amino-acid sequence, 77 residues long: NAD(P)H-quinone oxidoreductase subunit L (77 aa).

The next 2 membrane-spanning stretches (helical) occupy residues 12 to 32 (LIAY…LLFY) and 47 to 67 (LGIY…SPFL).

It belongs to the complex I NdhL subunit family. NDH-1 can be composed of about 15 different subunits; different subcomplexes with different compositions have been identified which probably have different functions.

It is found in the cellular thylakoid membrane. It carries out the reaction a plastoquinone + NADH + (n+1) H(+)(in) = a plastoquinol + NAD(+) + n H(+)(out). The catalysed reaction is a plastoquinone + NADPH + (n+1) H(+)(in) = a plastoquinol + NADP(+) + n H(+)(out). Its function is as follows. NDH-1 shuttles electrons from an unknown electron donor, via FMN and iron-sulfur (Fe-S) centers, to quinones in the respiratory and/or the photosynthetic chain. The immediate electron acceptor for the enzyme in this species is believed to be plastoquinone. Couples the redox reaction to proton translocation, and thus conserves the redox energy in a proton gradient. Cyanobacterial NDH-1 also plays a role in inorganic carbon-concentration. The chain is NAD(P)H-quinone oxidoreductase subunit L from Prochlorococcus marinus (strain AS9601).